The primary structure comprises 503 residues: Maturase K (503 aa).

It belongs to the intron maturase 2 family. MatK subfamily.

Its subcellular location is the plastid. It localises to the chloroplast. In terms of biological role, usually encoded in the trnK tRNA gene intron. Probably assists in splicing its own and other chloroplast group II introns. This chain is Maturase K, found in Syzygium anisatum (Aniseed myrtle).